Consider the following 217-residue polypeptide: Uracil-DNA glycosylase (217 aa).

Aspartate 62 serves as the catalytic Proton acceptor.

Belongs to the uracil-DNA glycosylase (UDG) superfamily. UNG family.

It is found in the cytoplasm. It catalyses the reaction Hydrolyzes single-stranded DNA or mismatched double-stranded DNA and polynucleotides, releasing free uracil.. Its function is as follows. Excises uracil residues from the DNA which can arise as a result of misincorporation of dUMP residues by DNA polymerase or due to deamination of cytosine. In Streptococcus pyogenes serotype M6 (strain ATCC BAA-946 / MGAS10394), this protein is Uracil-DNA glycosylase.